The following is a 149-amino-acid chain: Nucleoside diphosphate kinase (149 aa).

ATP-binding residues include K9, F57, R85, T91, R102, and N112. The Pros-phosphohistidine intermediate role is filled by H115.

This sequence belongs to the NDK family. In terms of assembly, homotetramer. It depends on Mg(2+) as a cofactor.

The protein resides in the cytoplasm. It catalyses the reaction a 2'-deoxyribonucleoside 5'-diphosphate + ATP = a 2'-deoxyribonucleoside 5'-triphosphate + ADP. The enzyme catalyses a ribonucleoside 5'-diphosphate + ATP = a ribonucleoside 5'-triphosphate + ADP. In terms of biological role, major role in the synthesis of nucleoside triphosphates other than ATP. The ATP gamma phosphate is transferred to the NDP beta phosphate via a ping-pong mechanism, using a phosphorylated active-site intermediate. This chain is Nucleoside diphosphate kinase, found in Thermomicrobium roseum (strain ATCC 27502 / DSM 5159 / P-2).